Consider the following 252-residue polypeptide: Small ribosomal subunit protein uS2 (252 aa).

At serine 2 the chain carries N-acetylserine. The segment covering 213–222 has biased composition (low complexity); sequence QVAEETAGAA. A disordered region spans residues 213-252; that stretch reads QVAEETAGAATEEEEAKEEVTEEQTEATEWAEETTEAVAW. A compositionally biased stretch (acidic residues) spans 223–252; sequence TEEEEAKEEVTEEQTEATEWAEETTEAVAW.

Belongs to the universal ribosomal protein uS2 family. In terms of assembly, component of the small ribosomal subunit. Mature ribosomes consist of a small (40S) and a large (60S) subunit. The 40S subunit contains about 33 different proteins and 1 molecule of RNA (18S). The 60S subunit contains about 49 different proteins and 3 molecules of RNA (25S, 5.8S and 5S). Interacts with RPS21.

The protein resides in the cytoplasm. Its function is as follows. Required for the assembly and/or stability of the 40S ribosomal subunit. Required for the processing of the 20S rRNA-precursor to mature 18S rRNA in a late step of the maturation of 40S ribosomal subunits. This chain is Small ribosomal subunit protein uS2, found in Zygosaccharomyces rouxii (strain ATCC 2623 / CBS 732 / NBRC 1130 / NCYC 568 / NRRL Y-229).